A 338-amino-acid polypeptide reads, in one-letter code: Heat-inducible transcription repressor HrcA (338 aa).

The protein belongs to the HrcA family.

Negative regulator of class I heat shock genes (grpE-dnaK-dnaJ and groELS operons). Prevents heat-shock induction of these operons. This Bacillus cereus (strain B4264) protein is Heat-inducible transcription repressor HrcA.